A 500-amino-acid polypeptide reads, in one-letter code: Ribose import ATP-binding protein RbsA (500 aa).

2 ABC transporter domains span residues 3–239 (IEMK…VGRE) and 246–493 (DRTP…TGGV). 35–42 (GENGAGKS) is an ATP binding site.

Belongs to the ABC transporter superfamily. Ribose importer (TC 3.A.1.2.1) family. In terms of assembly, the complex is composed of an ATP-binding protein (RbsA), two transmembrane proteins (RbsC) and a solute-binding protein (RbsB).

Its subcellular location is the cell membrane. The catalysed reaction is D-ribose(out) + ATP + H2O = D-ribose(in) + ADP + phosphate + H(+). Its function is as follows. Part of the ABC transporter complex RbsABC involved in ribose import. Responsible for energy coupling to the transport system. In Lacticaseibacillus paracasei (strain ATCC 334 / BCRC 17002 / CCUG 31169 / CIP 107868 / KCTC 3260 / NRRL B-441) (Lactobacillus paracasei), this protein is Ribose import ATP-binding protein RbsA.